A 369-amino-acid chain; its full sequence is Polycomb group protein FERTILIZATION-INDEPENDENT ENDOSPERM (369 aa).

WD repeat units follow at residues 31–73, 81–123, 126–166, 172–212, 238–275, 287–328, and 335–368; these read EGKK…AISA, DKEE…IHKS, GHGD…CILI, GHRY…TYVE, IHTN…NSPG, VPMC…PVLI, and QSKS…DVIT.

This sequence belongs to the WD repeat ESC family. As to quaternary structure, interacts directly with MEA. These two proteins are probably indirectly associated with FIS2. In plants, PcG complexes are probably composed of a member of the EZ family (CLF or MEA), FIE, and a member of the VEFS family (FIS2, VRN2 or EMF2). Component of the plant homeodomain / polycomb repressive complex 2 (PHD-PRC2) large complex during prolonged cold, composed of core PRC2 components (VRN2, EZA1, FIE and MSI1), and three related PHD finger proteins (VIL1, VIL2 and VIN3) that mediates histone H3 trimethylation on 'Lys-27' (H3K27me3). Binds to ALP1. Expressed in cauline leaves, root and stems. In the male reproductive organ, it is expressed in the developing anther; and is abundant in microspore mother cells, in microsporocytes and in the tapetum, but is absent from vascular bundles, the connective tissue and the filament. It is also absent from pollen grains at subsequent developmental stages. In the developing female reproductive organs, it is highly expressed in all cells of the young ovules primordium before archesporial differentiation. Then, it is highly expressed in the ovule sporophytic tissue and the megaspore mother cell before meiosis, but is absent from placenta or the developing carpel. Then, it decreases.

The protein localises to the nucleus. Polycomb group (PcG) protein. PcG proteins act by forming multiprotein complexes, which are required to maintain the transcriptionally repressive state of homeotic genes throughout development. PcG proteins are not required to initiate repression, but to maintain it during later stages of development. They probably act via the methylation of histones, rendering chromatin heritably changed in its expressibility. Required to prevent the proliferation of the central cell by repressing unknown target genes before fertilization. Probably also involved in floral repression mechanism established during early plant development. Regulates the anteroposterior organization of the endosperm. Interacts with the promoter and represses the transcription of genes such as PHE1, that are paternally active and maternally silenced. This Arabidopsis thaliana (Mouse-ear cress) protein is Polycomb group protein FERTILIZATION-INDEPENDENT ENDOSPERM (FIE).